A 280-amino-acid polypeptide reads, in one-letter code: 4-diphosphocytidyl-2-C-methyl-D-erythritol kinase (280 aa).

K8 is a catalytic residue. Residue 91–101 (PVSAGLAGGST) participates in ATP binding. Residue D133 is part of the active site.

The protein belongs to the GHMP kinase family. IspE subfamily.

It catalyses the reaction 4-CDP-2-C-methyl-D-erythritol + ATP = 4-CDP-2-C-methyl-D-erythritol 2-phosphate + ADP + H(+). It functions in the pathway isoprenoid biosynthesis; isopentenyl diphosphate biosynthesis via DXP pathway; isopentenyl diphosphate from 1-deoxy-D-xylulose 5-phosphate: step 3/6. Catalyzes the phosphorylation of the position 2 hydroxy group of 4-diphosphocytidyl-2C-methyl-D-erythritol. The polypeptide is 4-diphosphocytidyl-2-C-methyl-D-erythritol kinase (Clostridium botulinum (strain Alaska E43 / Type E3)).